The following is a 188-amino-acid chain: UPF0301 protein MCA2336 2 (188 aa).

Belongs to the UPF0301 (AlgH) family.

This Methylococcus capsulatus (strain ATCC 33009 / NCIMB 11132 / Bath) protein is UPF0301 protein MCA2336 2.